Here is a 227-residue protein sequence, read N- to C-terminus: Large ribosomal subunit protein bL25 (227 aa).

It belongs to the bacterial ribosomal protein bL25 family. CTC subfamily. Part of the 50S ribosomal subunit; part of the 5S rRNA/L5/L18/L25 subcomplex. Contacts the 5S rRNA. Binds to the 5S rRNA independently of L5 and L18.

This is one of the proteins that binds to the 5S RNA in the ribosome where it forms part of the central protuberance. The polypeptide is Large ribosomal subunit protein bL25 (Polaromonas sp. (strain JS666 / ATCC BAA-500)).